Here is a 282-residue protein sequence, read N- to C-terminus: Putative phosphoesterase 244L (282 aa).

A divalent metal cation is bound by residues aspartate 45, asparagine 80, and histidine 203.

The protein belongs to the metallophosphoesterase superfamily. IIV-6 244L family.

The protein is Putative phosphoesterase 244L of Invertebrate iridescent virus 6 (IIV-6).